The primary structure comprises 405 residues: Deoxyguanosinetriphosphate triphosphohydrolase-like protein (405 aa).

Residues 75–219 (RLTHTIEVAQ…AAIADDIAYN (145 aa)) form the HD domain.

Belongs to the dGTPase family. Type 2 subfamily.

The sequence is that of Deoxyguanosinetriphosphate triphosphohydrolase-like protein from Rhizobium johnstonii (strain DSM 114642 / LMG 32736 / 3841) (Rhizobium leguminosarum bv. viciae).